The chain runs to 336 residues: Ankyrin repeat and SOCS box protein 1 (336 aa).

6 ANK repeats span residues Cys-37 to Glu-69, Leu-78 to Leu-107, Lys-111 to Gly-140, His-144 to Val-173, Leu-192 to Phe-221, and Ser-236 to Leu-266. Positions Leu-287–Glu-336 constitute an SOCS box domain.

Belongs to the ankyrin SOCS box (ASB) family. Interacts with CUL5 and RNF7. As to expression, highest expression in testis, spleen, bone marrow and salivary gland.

It participates in protein modification; protein ubiquitination. In terms of biological role, probable substrate-recognition component of a SCF-like ECS (Elongin-Cullin-SOCS-box protein) E3 ligase complex which mediates the ubiquitination and subsequent proteasomal degradation of target proteins. Mediates Notch-induced ubiquitination and degradation of TCF3/E2A and JAK2. May play a role in testis development. The polypeptide is Ankyrin repeat and SOCS box protein 1 (Asb1) (Mus musculus (Mouse)).